The sequence spans 635 residues: Putative adagio-like protein 2 (635 aa).

The span at 1–25 shows a compositional bias: acidic residues; that stretch reads MEWDSDSEGSGDEEEEEEEEEEEGV. A disordered region spans residues 1 to 32; sequence MEWDSDSEGSGDEEEEEEEEEEEGVEVGGGGD. In terms of domain architecture, PAS spans 44–123; the sequence is ALAIEGVLGA…TDIRRCLEEG (80 aa). S-4a-FMN cysteine is present on Cys91. In terms of domain architecture, F-box spans 209 to 255; the sequence is SDLFLLSDEVLCQKILSRLSPRDIASVNSVCKRLYHLTRNDDLWRMV. Kelch repeat units lie at residues 371–421, 423–474, 476–530, and 542–594; these read RLVL…TLDG, KLVV…VYDG, KILM…PPPR, and RILI…VVGG.

This sequence belongs to the ADAGIO family. Post-translationally, FMN binds covalently to cysteine after exposure to blue light and is reversed in the dark.

Its subcellular location is the nucleus. It participates in protein modification; protein ubiquitination. Component of an E3 ubiquitin ligase complex that plays a central role in blue light-dependent circadian cycles. Acts as a blue light photoreceptor, due to the presence of FMN, that mediates light-regulated protein degradation of critical clock components by targeting them to the proteasome complex. The chain is Putative adagio-like protein 2 from Oryza sativa subsp. japonica (Rice).